A 333-amino-acid chain; its full sequence is Phenylalanine--tRNA ligase alpha subunit (333 aa).

E248 contacts Mg(2+).

Belongs to the class-II aminoacyl-tRNA synthetase family. Phe-tRNA synthetase alpha subunit type 1 subfamily. Tetramer of two alpha and two beta subunits. Mg(2+) is required as a cofactor.

It localises to the cytoplasm. The enzyme catalyses tRNA(Phe) + L-phenylalanine + ATP = L-phenylalanyl-tRNA(Phe) + AMP + diphosphate + H(+). This Ureaplasma parvum serovar 3 (strain ATCC 27815 / 27 / NCTC 11736) protein is Phenylalanine--tRNA ligase alpha subunit.